A 255-amino-acid polypeptide reads, in one-letter code: 5'-nucleotidase SurE (255 aa).

A divalent metal cation contacts are provided by aspartate 8, aspartate 9, serine 40, and asparagine 93.

This sequence belongs to the SurE nucleotidase family. The cofactor is a divalent metal cation.

The protein localises to the cytoplasm. The catalysed reaction is a ribonucleoside 5'-phosphate + H2O = a ribonucleoside + phosphate. In terms of biological role, nucleotidase that shows phosphatase activity on nucleoside 5'-monophosphates. This Rhodopseudomonas palustris (strain HaA2) protein is 5'-nucleotidase SurE.